We begin with the raw amino-acid sequence, 508 residues long: DNA-directed RNA polymerase subunit alpha (508 aa).

Positions 1 to 380 are alpha N-terminal domain (alpha-NTD); sequence MKHILLSCVE…HLFSPFLQTH (380 aa). The interval 434 to 508 is alpha C-terminal domain (alpha-CTD); that stretch reads NLVTAIQTLD…LKNFGVLPTS (75 aa).

It belongs to the RNA polymerase alpha chain family. In plastids the minimal PEP RNA polymerase catalytic core is composed of four subunits: alpha, beta, beta', and beta''. When a (nuclear-encoded) sigma factor is associated with the core the holoenzyme is formed, which can initiate transcription.

It localises to the plastid. Its subcellular location is the chloroplast. It carries out the reaction RNA(n) + a ribonucleoside 5'-triphosphate = RNA(n+1) + diphosphate. DNA-dependent RNA polymerase catalyzes the transcription of DNA into RNA using the four ribonucleoside triphosphates as substrates. The protein is DNA-directed RNA polymerase subunit alpha (rpoA) of Oltmannsiellopsis viridis (Marine flagellate).